The chain runs to 543 residues: Chaperonin GroEL 7 (543 aa).

ATP is bound by residues 30-33 (TLGP), Lys-51, 87-91 (DGTTT), Gly-415, and Asp-496.

Belongs to the chaperonin (HSP60) family. Forms a cylinder of 14 subunits composed of two heptameric rings stacked back-to-back. Interacts with the co-chaperonin GroES.

The protein resides in the cytoplasm. The catalysed reaction is ATP + H2O + a folded polypeptide = ADP + phosphate + an unfolded polypeptide.. Together with its co-chaperonin GroES, plays an essential role in assisting protein folding. The GroEL-GroES system forms a nano-cage that allows encapsulation of the non-native substrate proteins and provides a physical environment optimized to promote and accelerate protein folding. The sequence is that of Chaperonin GroEL 7 from Bradyrhizobium diazoefficiens (strain JCM 10833 / BCRC 13528 / IAM 13628 / NBRC 14792 / USDA 110).